The primary structure comprises 279 residues: MAVKRIKNHSSGKRQTVVVDYKSILTTSKPEKSLLVTLPKKAGRNNQGKITIRHHGGGHKRKYRIIDFKRNKDNIYGTIKSIEYDPNRTSFISLVVYADGEKRYIIAPKGIKVGDKIISGNENIDILLGNSLPLEFIPEGTLVHNIELSPNAGGQITRSAGASAQILGFDETKKYILVKLNSGEVRKFRKECRATIGTVSNDEHILENLGKAGKSRHLGVRPTVRGSAMNPNDHPHGGGEGRSPVGMDAPRTPWGKRHMGVKTRNNKKSSTSMIVRRRK.

Residues 223 to 279 (TVRGSAMNPNDHPHGGGEGRSPVGMDAPRTPWGKRHMGVKTRNNKKSSTSMIVRRRK) form a disordered region. The segment covering 254-267 (WGKRHMGVKTRNNK) has biased composition (basic residues).

It belongs to the universal ribosomal protein uL2 family. Part of the 50S ribosomal subunit. Forms a bridge to the 30S subunit in the 70S ribosome.

In terms of biological role, one of the primary rRNA binding proteins. Required for association of the 30S and 50S subunits to form the 70S ribosome, for tRNA binding and peptide bond formation. It has been suggested to have peptidyltransferase activity; this is somewhat controversial. Makes several contacts with the 16S rRNA in the 70S ribosome. This chain is Large ribosomal subunit protein uL2, found in Ureaplasma parvum serovar 3 (strain ATCC 27815 / 27 / NCTC 11736).